The primary structure comprises 444 residues: L-cysteine:1D-myo-inositol 2-amino-2-deoxy-alpha-D-glucopyranoside ligase (444 aa).

Residues 1-13 (MPCDRKTSPDQHH) show a composition bias toward basic and acidic residues. A disordered region spans residues 1-21 (MPCDRKTSPDQHHALQIHRHH). Residue C75 participates in Zn(2+) binding. Residues 75-78 (CGIT), T90, and 113-115 (NIT) contribute to the L-cysteinyl-5'-AMP site. Positions 77-87 (ITPYDATHLGH) match the 'HIGH' region motif. Residues 219 to 224 (ERGGDP) carry the 'ERGGDP' region motif. W259 lines the L-cysteinyl-5'-AMP pocket. C263 provides a ligand contact to Zn(2+). An L-cysteinyl-5'-AMP-binding site is contributed by 281–283 (GSD). H288 lines the Zn(2+) pocket. Position 315 (I315) interacts with L-cysteinyl-5'-AMP. Positions 321–325 (KMSKS) match the 'KMSKS' region motif.

The protein belongs to the class-I aminoacyl-tRNA synthetase family. MshC subfamily. As to quaternary structure, monomer. Zn(2+) serves as cofactor.

The enzyme catalyses 1D-myo-inositol 2-amino-2-deoxy-alpha-D-glucopyranoside + L-cysteine + ATP = 1D-myo-inositol 2-(L-cysteinylamino)-2-deoxy-alpha-D-glucopyranoside + AMP + diphosphate + H(+). In terms of biological role, catalyzes the ATP-dependent condensation of GlcN-Ins and L-cysteine to form L-Cys-GlcN-Ins. This chain is L-cysteine:1D-myo-inositol 2-amino-2-deoxy-alpha-D-glucopyranoside ligase, found in Mycolicibacterium gilvum (strain PYR-GCK) (Mycobacterium gilvum (strain PYR-GCK)).